We begin with the raw amino-acid sequence, 390 residues long: GTPase Obg (390 aa).

The 159-residue stretch at 1-159 folds into the Obg domain; the sequence is MKFVDEATIL…RELMLELLLL (159 aa). The 174-residue stretch at 160-333 folds into the OBG-type G domain; sequence ADVGMLGLPN…LCWDVMNFLN (174 aa). Residues 166–173, 191–195, 213–216, 283–286, and 314–316 each bind GTP; these read GLPNAGKS, FTTLI, DIPG, NKID, and SAA. Ser-173 and Thr-193 together coordinate Mg(2+). Positions 363 to 384 are enriched in acidic residues; sequence EVEAEAESEDDDDWDEEDDDGV. A disordered region spans residues 363–390; the sequence is EVEAEAESEDDDDWDEEDDDGVEFIYER.

This sequence belongs to the TRAFAC class OBG-HflX-like GTPase superfamily. OBG GTPase family. In terms of assembly, monomer. Mg(2+) is required as a cofactor.

The protein localises to the cytoplasm. Its function is as follows. An essential GTPase which binds GTP, GDP and possibly (p)ppGpp with moderate affinity, with high nucleotide exchange rates and a fairly low GTP hydrolysis rate. Plays a role in control of the cell cycle, stress response, ribosome biogenesis and in those bacteria that undergo differentiation, in morphogenesis control. This is GTPase Obg from Yersinia enterocolitica serotype O:8 / biotype 1B (strain NCTC 13174 / 8081).